We begin with the raw amino-acid sequence, 225 residues long: Endonuclease V (225 aa).

Mg(2+) is bound by residues aspartate 43 and aspartate 110.

Belongs to the endonuclease V family. The cofactor is Mg(2+).

It is found in the cytoplasm. The catalysed reaction is Endonucleolytic cleavage at apurinic or apyrimidinic sites to products with a 5'-phosphate.. In terms of biological role, DNA repair enzyme involved in the repair of deaminated bases. Selectively cleaves double-stranded DNA at the second phosphodiester bond 3' to a deoxyinosine leaving behind the intact lesion on the nicked DNA. The chain is Endonuclease V from Thermotoga neapolitana (strain ATCC 49049 / DSM 4359 / NBRC 107923 / NS-E).